The primary structure comprises 816 residues: Neuroligin-4, Y-linked (816 aa).

An N-terminal signal peptide occupies residues 1–43; it reads MLRPQGLLWLPLLFTSVCVMLNSNVLLWITALAIKFTLIDSQA. Residues 44-676 are Extracellular-facing; that stretch reads QYPVVNTNYG…TKRDYSTELS (633 aa). A glycan (N-linked (GlcNAc...) asparagine) is linked at N102. Disulfide bonds link C110-C146 and C306-C317. The segment at 359-364 is interaction with NRXN1; sequence QGEFLN. C476 and C510 are disulfide-bonded. N511 carries an N-linked (GlcNAc...) asparagine glycan. A disordered region spans residues 636 to 659; it reads TKRPAITPANNPKHSKDPHKTGPE. Basic and acidic residues predominate over residues 649–658; the sequence is HSKDPHKTGP. The chain crosses the membrane as a helical span at residues 677 to 697; that stretch reads VTIAVGASLLFLNILAFAALY. Topologically, residues 698 to 816 are cytoplasmic; it reads YKKDKRRHET…LPHGHSTTRV (119 aa). Position 712 is a phosphoserine (S712).

Belongs to the type-B carboxylesterase/lipase family. As to quaternary structure, homodimer. Interacts with NRXN1 in a calcium-dependent manner. Interaction with neurexins is mediated by heparan sulfate glycan modification on neurexin. Interacts through its C-terminus with DLG4/PSD-95 third PDZ domain. As to expression, expressed in fetal and adult brain, prostate and testis.

The protein resides in the cell membrane. The protein localises to the postsynaptic density membrane. Its function is as follows. Cell surface protein involved in cell-cell-interactions via its interactions with neurexin family members. In Homo sapiens (Human), this protein is Neuroligin-4, Y-linked (NLGN4Y).